Reading from the N-terminus, the 283-residue chain is Pantothenate synthetase (283 aa).

Position 30-37 (Met-30–His-37) interacts with ATP. His-37 acts as the Proton donor in catalysis. Gln-61 provides a ligand contact to (R)-pantoate. Gln-61 is a beta-alanine binding site. Gly-149–Asp-152 provides a ligand contact to ATP. Gln-155 contributes to the (R)-pantoate binding site. ATP is bound at residue Leu-186–Arg-189.

The protein belongs to the pantothenate synthetase family. Homodimer.

The protein resides in the cytoplasm. The enzyme catalyses (R)-pantoate + beta-alanine + ATP = (R)-pantothenate + AMP + diphosphate + H(+). It functions in the pathway cofactor biosynthesis; (R)-pantothenate biosynthesis; (R)-pantothenate from (R)-pantoate and beta-alanine: step 1/1. Functionally, catalyzes the condensation of pantoate with beta-alanine in an ATP-dependent reaction via a pantoyl-adenylate intermediate. The protein is Pantothenate synthetase of Shigella dysenteriae serotype 1 (strain Sd197).